The chain runs to 228 residues: Archaeal flagellar ATP-binding protein FlaH (228 aa).

ATP contacts are provided by Gly30, Thr31, Lys33, Ser34, Val35, Glu57, and Lys191. Residue Ser34 participates in Mg(2+) binding. Mg(2+) is bound at residue Glu57.

This sequence belongs to the FlaH family. In terms of assembly, the S.acidocaldarius archaellum assembly machinery and its filament consist of seven proteins (FlaB, FlaF, FlaG, FlaH, FlaI, FlaJ and FlaX). Interacts directly with the FlaX ring and the motor ATPase FlaI. Monomers, which can probably form homohexamers upon binding to ATP. In vitro, FlaH assembles as a second ring inside the FlaX ring.

It localises to the archaeal flagellum. The protein resides in the cytoplasm. Its function is as follows. Component of the archaellum. FlaX, FlaH and FlaI form the core cytoplasmic motor complex of the crenarchaeal archaellum. FlaH binds ATP with high affinity but lacks detectable in vitro ATPase activity. ATP binding is essential for interaction with FlaI and for archaellum assembly. This Sulfolobus acidocaldarius (strain ATCC 33909 / DSM 639 / JCM 8929 / NBRC 15157 / NCIMB 11770) protein is Archaeal flagellar ATP-binding protein FlaH.